A 201-amino-acid chain; its full sequence is Lymphotoxin-alpha (201 aa).

The signal sequence occupies residues 1 to 27 (MTSSGVLCLLGALSLQVLLLQPPGAQG). Residues 23-52 (PGAQGAPNPDNSHSSSPAPPQTAQHLSQKS) form a disordered region. The span at 31-51 (PDNSHSSSPAPPQTAQHLSQK) shows a compositional bias: polar residues. One can recognise a THD domain in the interval 60 to 201 (PAAHLVGDPS…SSVFFGAFAL (142 aa)). N-linked (GlcNAc...) asparagine glycosylation occurs at Asn93. Cysteines 117 and 152 form a disulfide.

The protein belongs to the tumor necrosis factor family. In terms of assembly, homotrimer, and heterotrimer of either two LTB and one LTA subunits or (less prevalent) two LTA and one LTB subunits. Interacts with TNFRSF14.

The protein resides in the secreted. It localises to the membrane. Functionally, cytokine that in its homotrimeric form binds to TNFRSF1A/TNFR1, TNFRSF1B/TNFBR and TNFRSF14/HVEM. In its heterotrimeric form with LTB binds to TNFRSF3/LTBR. Lymphotoxin is produced by lymphocytes and is cytotoxic for a wide range of tumor cells in vitro and in vivo. This is Lymphotoxin-alpha (LTA) from Notamacropus eugenii (Tammar wallaby).